Consider the following 355-residue polypeptide: Mannonate dehydratase (355 aa).

This sequence belongs to the mannonate dehydratase family. Requires Fe(2+) as cofactor. Mn(2+) is required as a cofactor.

It carries out the reaction D-mannonate = 2-dehydro-3-deoxy-D-gluconate + H2O. It functions in the pathway carbohydrate metabolism; pentose and glucuronate interconversion. Its function is as follows. Catalyzes the dehydration of D-mannonate. This chain is Mannonate dehydratase, found in Brachyspira hyodysenteriae (strain ATCC 49526 / WA1).